A 466-amino-acid chain; its full sequence is UDP-N-acetylmuramoylalanine--D-glutamate ligase (466 aa).

117–123 serves as a coordination point for ATP; sequence GTKGKTT.

It belongs to the MurCDEF family.

Its subcellular location is the cytoplasm. The catalysed reaction is UDP-N-acetyl-alpha-D-muramoyl-L-alanine + D-glutamate + ATP = UDP-N-acetyl-alpha-D-muramoyl-L-alanyl-D-glutamate + ADP + phosphate + H(+). Its pathway is cell wall biogenesis; peptidoglycan biosynthesis. Cell wall formation. Catalyzes the addition of glutamate to the nucleotide precursor UDP-N-acetylmuramoyl-L-alanine (UMA). This is UDP-N-acetylmuramoylalanine--D-glutamate ligase from Roseiflexus sp. (strain RS-1).